Here is a 453-residue protein sequence, read N- to C-terminus: MNIVILAAGTGKRMRSALPKVLHPLAGRPLLSHVIATARTLQPSRLVVVVGHGAEQVQAAVAAPDVQFAVQAEQLGTGHAVRQALPLLDPAQPTLVLYGDVPLTRASTLRRLVDAARDGSYGILTVTLDDPTGYGRIVRDAAGFVTRIVEQKDASPEQLKIAEINTGIIITPTGQLAMWLGALKNENAQGEYYLTDVVELAIEAGFDVVTSQPDDEWETLGVNSKAQLAELERIHQRNVADALLVDGVTLADPARVDVRGTLRCGRDVSIDVNCVFEGNVTLADNVTIGPNCVIRNASVGTGTRIDAFTHIDGAELGANTVIGPYARLRPGAQLADEAHVGNFVEVKNAVIGHGSKANHLTYIGDADIGARVNIGAGTITCNYDGANKFRTVIEDDVFVGSDTQLVAPVRVGRGVTIAAGTTIWKDVAEGVLALNEKTQTAKSGYVRPVKKKS.

Residues 1–225 (MNIVILAAGT…EWETLGVNSK (225 aa)) are pyrophosphorylase. Residues 6 to 9 (LAAG), Lys-20, Gln-71, 76 to 77 (GT), 98 to 100 (YGD), Gly-135, Glu-150, Asn-165, and Asn-223 each bind UDP-N-acetyl-alpha-D-glucosamine. Asp-100 contributes to the Mg(2+) binding site. Asn-223 provides a ligand contact to Mg(2+). Residues 226–246 (AQLAELERIHQRNVADALLVD) form a linker region. An N-acetyltransferase region spans residues 247 to 453 (GVTLADPARV…GYVRPVKKKS (207 aa)). UDP-N-acetyl-alpha-D-glucosamine contacts are provided by Arg-329 and Lys-347. Catalysis depends on His-359, which acts as the Proton acceptor. UDP-N-acetyl-alpha-D-glucosamine contacts are provided by Tyr-362 and Asn-373. Residues Ala-376, 382 to 383 (NY), Ser-401, and Ala-419 contribute to the acetyl-CoA site.

It in the N-terminal section; belongs to the N-acetylglucosamine-1-phosphate uridyltransferase family. The protein in the C-terminal section; belongs to the transferase hexapeptide repeat family. As to quaternary structure, homotrimer. Requires Mg(2+) as cofactor.

It is found in the cytoplasm. The catalysed reaction is alpha-D-glucosamine 1-phosphate + acetyl-CoA = N-acetyl-alpha-D-glucosamine 1-phosphate + CoA + H(+). The enzyme catalyses N-acetyl-alpha-D-glucosamine 1-phosphate + UTP + H(+) = UDP-N-acetyl-alpha-D-glucosamine + diphosphate. Its pathway is nucleotide-sugar biosynthesis; UDP-N-acetyl-alpha-D-glucosamine biosynthesis; N-acetyl-alpha-D-glucosamine 1-phosphate from alpha-D-glucosamine 6-phosphate (route II): step 2/2. The protein operates within nucleotide-sugar biosynthesis; UDP-N-acetyl-alpha-D-glucosamine biosynthesis; UDP-N-acetyl-alpha-D-glucosamine from N-acetyl-alpha-D-glucosamine 1-phosphate: step 1/1. It functions in the pathway bacterial outer membrane biogenesis; LPS lipid A biosynthesis. Functionally, catalyzes the last two sequential reactions in the de novo biosynthetic pathway for UDP-N-acetylglucosamine (UDP-GlcNAc). The C-terminal domain catalyzes the transfer of acetyl group from acetyl coenzyme A to glucosamine-1-phosphate (GlcN-1-P) to produce N-acetylglucosamine-1-phosphate (GlcNAc-1-P), which is converted into UDP-GlcNAc by the transfer of uridine 5-monophosphate (from uridine 5-triphosphate), a reaction catalyzed by the N-terminal domain. This Burkholderia ambifaria (strain ATCC BAA-244 / DSM 16087 / CCUG 44356 / LMG 19182 / AMMD) (Burkholderia cepacia (strain AMMD)) protein is Bifunctional protein GlmU.